We begin with the raw amino-acid sequence, 291 residues long: ATP synthase gamma chain (291 aa).

This sequence belongs to the ATPase gamma chain family. In terms of assembly, F-type ATPases have 2 components, CF(1) - the catalytic core - and CF(0) - the membrane proton channel. CF(1) has five subunits: alpha(3), beta(3), gamma(1), delta(1), epsilon(1). CF(0) has three main subunits: a, b and c.

It localises to the cell membrane. In terms of biological role, produces ATP from ADP in the presence of a proton gradient across the membrane. The gamma chain is believed to be important in regulating ATPase activity and the flow of protons through the CF(0) complex. The protein is ATP synthase gamma chain of Streptococcus pyogenes serotype M3 (strain ATCC BAA-595 / MGAS315).